A 277-amino-acid chain; its full sequence is Carbonyl reductase [NADPH] 1 (277 aa).

Residue serine 2 is modified to N-acetylserine. Serine 2 and serine 30 each carry phosphoserine. NADP(+)-binding positions include 10–34 (VTGA…GDVV), 63–64 (DI), and asparagine 90. Residues 95–97 (FKV) and glutamine 106 contribute to the glutathione site. Serine 140 provides a ligand contact to substrate. 193-194 (AY) contributes to the glutathione binding site. The active-site Proton acceptor is tyrosine 194. NADP(+) contacts are provided by residues 194 to 198 (YGVTK) and 231 to 233 (VRT). Lysine 239 is subject to N6-1-carboxyethyl lysine. Positions 258 to 277 (PPDAEGPHGQFVQDKKVEPW) are disordered.

This sequence belongs to the short-chain dehydrogenases/reductases (SDR) family. As to quaternary structure, monomer.

It is found in the cytoplasm. The catalysed reaction is a secondary alcohol + NADP(+) = a ketone + NADPH + H(+). It catalyses the reaction prostaglandin F2alpha + NADP(+) = prostaglandin E2 + NADPH + H(+). The enzyme catalyses prostaglandin E1 + NADP(+) = 15-oxoprostaglandin E1 + NADPH + H(+). It carries out the reaction menadione + NADPH + H(+) = menadiol + NADP(+). The catalysed reaction is prostaglandin D2 + NADP(+) = 15-oxoprostaglandin D2 + NADPH + H(+). It catalyses the reaction prostaglandin E2 + NADP(+) = 15-oxoprostaglandin E2 + NADPH + H(+). The enzyme catalyses prostaglandin F2alpha + NADP(+) = 15-oxoprostaglandin F2alpha + NADPH + H(+). It carries out the reaction daunorubicin + NADPH + H(+) = 13-dihydrodaunorubicin + NADP(+). The catalysed reaction is S-nitrosoglutathione + NADPH + H(+) = S-(hydroxysulfenamide)glutathione + NADP(+). It catalyses the reaction corticosterone + NADPH + H(+) = 20beta-dihydrocorticosterone + NADP(+). The enzyme catalyses a primary alcohol + NADP(+) = an aldehyde + NADPH + H(+). It carries out the reaction cortisol + NADPH + H(+) = 20beta-dihydrocortisol + NADP(+). Functionally, NADPH-dependent reductase with broad substrate specificity. Catalyzes the reduction of a wide variety of carbonyl compounds including quinones, prostaglandins, menadione, plus various xenobiotics. Catalyzes the reduction of the antitumor anthracyclines doxorubicin and daunorubicin to the cardiotoxic compounds doxorubicinol and daunorubicinol. Can convert prostaglandin E to prostaglandin F2-alpha. Can bind glutathione, which explains its higher affinity for glutathione-conjugated substrates. Catalyzes the reduction of S-nitrosoglutathione. In addition, participates in the glucocorticoid metabolism by catalyzing the NADPH-dependent cortisol/corticosterone into 20beta-dihydrocortisol (20b-DHF) or 20beta-corticosterone (20b-DHB), which are weak agonists of NR3C1 and NR3C2 in adipose tissue. This is Carbonyl reductase [NADPH] 1 from Mus musculus (Mouse).